A 553-amino-acid chain; its full sequence is Replication factor C large subunit (553 aa).

An ATP-binding site is contributed by 50-57 (GGPGVGKT). The interval 438 to 553 (GKRPGKPEAG…SKKQRTLFDF (116 aa)) is disordered. Positions 442-451 (GKPEAGEPRE) are enriched in basic and acidic residues. Positions 503–513 (EAPMAAAMPAA) are enriched in low complexity. A compositionally biased stretch (basic and acidic residues) spans 532-553 (EPEKPPAAEDKCSKKQRTLFDF).

It belongs to the activator 1 small subunits family. RfcL subfamily. In terms of assembly, heteromultimer composed of small subunits (RfcS) and large subunits (RfcL).

Functionally, part of the RFC clamp loader complex which loads the PCNA sliding clamp onto DNA. In Methanocella arvoryzae (strain DSM 22066 / NBRC 105507 / MRE50), this protein is Replication factor C large subunit.